Consider the following 113-residue polypeptide: Phosphorelay protein LuxU (113 aa).

Positions 18 to 113 (GEENVPILVN…THQCYSDLVH (96 aa)) constitute an HPt domain. Phosphohistidine is present on His-57.

In terms of assembly, monomer.

Phosphorelay protein which receives sensory signals from a sensory kinase and transmit them to LuxO. At low cell density, a phosphoryl group is transferred from the sensory kinase, probably on His-57 and this phosphoryl group is further transferred to LuxO. The sequence is that of Phosphorelay protein LuxU (luxU) from Vibrio cholerae serotype O1 (strain ATCC 39315 / El Tor Inaba N16961).